Here is a 259-residue protein sequence, read N- to C-terminus: Deoxyribose-phosphate aldolase (259 aa).

The Proton donor/acceptor role is filled by aspartate 102. The active-site Schiff-base intermediate with acetaldehyde is lysine 167. The active-site Proton donor/acceptor is lysine 201.

It belongs to the DeoC/FbaB aldolase family. DeoC type 2 subfamily.

It localises to the cytoplasm. The enzyme catalyses 2-deoxy-D-ribose 5-phosphate = D-glyceraldehyde 3-phosphate + acetaldehyde. It participates in carbohydrate degradation; 2-deoxy-D-ribose 1-phosphate degradation; D-glyceraldehyde 3-phosphate and acetaldehyde from 2-deoxy-alpha-D-ribose 1-phosphate: step 2/2. Catalyzes a reversible aldol reaction between acetaldehyde and D-glyceraldehyde 3-phosphate to generate 2-deoxy-D-ribose 5-phosphate. This Proteus mirabilis (strain HI4320) protein is Deoxyribose-phosphate aldolase.